Consider the following 1050-residue polypeptide: TSC22 domain family protein 1 (1050 aa).

A required for interaction with TGFBR1 and promotion of TGF-beta signaling region spans residues Met-1–Leu-99. 8 disordered regions span residues Met-22–Gly-111, Ile-126–Ala-285, Gln-445–Ser-479, Asp-511–Gln-531, Leu-581–Tyr-609, Val-720–Ser-740, Gln-795–Val-847, and Ser-879–Gly-919. Positions Ala-38 to Ser-55 are enriched in low complexity. A compositionally biased stretch (pro residues) spans Phe-58–Ala-71. A compositionally biased stretch (low complexity) spans Ser-85–Gln-97. The segment covering Glu-134–Asp-143 has biased composition (acidic residues). A compositionally biased stretch (basic residues) spans His-217–Ser-241. The residue at position 265 (Ser-265) is a Phosphoserine. Residues Thr-458–Ser-476 show a composition bias toward low complexity. Residues Leu-586–Pro-603 show a composition bias toward pro residues. Over residues Leu-906–Gly-919 the composition is skewed to low complexity. The tract at residues Leu-983–Leu-1004 is leucine-zipper. Residues Gln-1015–Ala-1050 form a disordered region. Residues Gln-1021–Ala-1050 show a composition bias toward low complexity.

It belongs to the TSC-22/Dip/Bun family. As to quaternary structure, forms homodimers. Forms heterodimers. Component of a complex composed of TSC22D1 (via N-terminus), TGFBR1 and TGFBR2; the interaction between TSC22D1 and TGFBR1 is inhibited by SMAD7 and promoted by TGFB1. Interacts with SMAD7; the interaction requires TGF-beta and the interaction is inhibited by TGFBR1. Interacts with TPT1/fortilin; interaction results in the destabilization of TSC22D1 protein and prevents TSC22D1-mediated apoptosis. Interacts with SMAD4 (via N-terminus). Interacts with ACVRL1/ALK1, ACVR1/ALK2, BMPR1A/ALK3, ACVR1B/ALK4, BMPR1B/ALK6, ACVR2A/ACTRII, and BMPR2. Interacts with SMAD6. Interacts with TFE3; the interaction is enhanced in the presence of TGF-beta. Forms a heterodimer with TSC22D4/THG1. In terms of assembly, forms a heterodimer with TSC22D4/THG1. Interacts with histone H1-2. Interacts with GNL3. As to expression, ubiquitously expressed, abundantly expressed in testis, ovary, uterus, and lung. Expressed in cardiomyocytes.

It localises to the cytoplasm. The protein resides in the nucleus. It is found in the cell membrane. The protein localises to the mitochondrion. In terms of biological role, transcriptional repressor. Acts on the C-type natriuretic peptide (CNP) promoter. Acts to promote CASP3-mediated apoptosis. Positively regulates TGF-beta signaling by interacting with SMAD7 which inhibits binding of SMAD7 to TGFBR1, preventing recruitment of SMURF ubiquitin ligases to TGFBR1 and inhibiting SMURF-mediated ubiquitination and degradation of TGFBR1. Contributes to enhancement of TGF-beta signaling by binding to and modulating the transcription activator activity of SMAD4. Promotes TGF-beta-induced transcription of COL1A2; via its interaction with TFE3 at E-boxes in the gene proximal promoter. Plays a role in the repression of hematopoietic precursor cell growth. Promotes IL2 deprivation-induced apoptosis in T-lymphocytes, via repression of TSC22D3/GILZ transcription and activation of the caspase cascade. Functionally, may act to negatively regulate TGFB3 signaling and thereby inhibit cell death in mammary gland cells. Its function is as follows. Positively regulates cell death in response to TGFB3 during mammary gland involution. The polypeptide is TSC22 domain family protein 1 (Rattus norvegicus (Rat)).